A 503-amino-acid chain; its full sequence is UDP-N-acetylmuramoylalanine--D-glutamate ligase (503 aa).

129–135 (GTNGKTT) serves as a coordination point for ATP.

Belongs to the MurCDEF family.

The protein localises to the cytoplasm. The enzyme catalyses UDP-N-acetyl-alpha-D-muramoyl-L-alanine + D-glutamate + ATP = UDP-N-acetyl-alpha-D-muramoyl-L-alanyl-D-glutamate + ADP + phosphate + H(+). The protein operates within cell wall biogenesis; peptidoglycan biosynthesis. Its function is as follows. Cell wall formation. Catalyzes the addition of glutamate to the nucleotide precursor UDP-N-acetylmuramoyl-L-alanine (UMA). This is UDP-N-acetylmuramoylalanine--D-glutamate ligase from Burkholderia vietnamiensis (strain G4 / LMG 22486) (Burkholderia cepacia (strain R1808)).